The chain runs to 109 residues: Large ribosomal subunit protein uL22 (109 aa).

This sequence belongs to the universal ribosomal protein uL22 family. In terms of assembly, part of the 50S ribosomal subunit.

Its function is as follows. This protein binds specifically to 23S rRNA; its binding is stimulated by other ribosomal proteins, e.g. L4, L17, and L20. It is important during the early stages of 50S assembly. It makes multiple contacts with different domains of the 23S rRNA in the assembled 50S subunit and ribosome. In terms of biological role, the globular domain of the protein is located near the polypeptide exit tunnel on the outside of the subunit, while an extended beta-hairpin is found that lines the wall of the exit tunnel in the center of the 70S ribosome. The protein is Large ribosomal subunit protein uL22 of Thiobacillus denitrificans (strain ATCC 25259 / T1).